A 671-amino-acid polypeptide reads, in one-letter code: MLPHPLAILSEEETNIARNVILAQHPNTVIDFREIYLSEPPKAQLLEFLALEHSGRLSPTSPRPPRLALCQYDVIGNDRIPSFEESVVDVGTRQRVQHRVVGKEHHASLTLSEFDTLVERCFASPLFQKALADFDLPEGFEVVIEPWPYGGLDYVEEKRRYFQGLCFATDKRKNNPDANFYSYPLPLIPVMDALTQEIIRVDRPATGGKGEGLTEQTFKRDIIGHCKDSDYVPELNPGGTRKDLKPLNVVQPEGPSFRITEESLVEWQKWRFRVAFNPREGATIHDVWYDGRSVLYRLSVSEMTVPYADPRPPFHRKQAFDFGDGGGGNMANNLSIGCDCLGVIKYFDAVMTGADGSAKKMPNAICLHEQDNGIGWKHSNWRTGRAVVTRHRELVVQFIITLANYEYIFAYKFDQSGGITVESRATGILNVVNIDAGKVSEYGNVVSGGVLAQNHQHIFCVRIDPAIDGPNNSVQVEESHPVPMNAVTNPNGNFYKVNTETMERAGFFDAAPELNRTVKMVNPHKKNPISQKPVGYKFIPLATQRLLADPNSIQARRAQFAQHHVWVTKYRDGELYAGGRYTLQSQEEIEGVSDAVKRGDSVVDTDVVVWSTFGITHNPRVEDWPVMPVEIFQLMIRPADFFTANPSLDVPSDKNISSRVVGNDCCRNAHI.

The N2 stretch occupies residues 3-106 (PHPLAILSEE…QHRVVGKEHH (104 aa)). The N3 stretch occupies residues 107-211 (ASLTLSEFDT…DRPATGGKGE (105 aa)). 319–330 (AFDFGDGGGGNM) is a substrate binding site. The active-site Proton acceptor is the Asp321. Cysteines 340 and 366 form a disulfide. Residue 402–407 (LANYEY) participates in substrate binding. The Schiff-base intermediate with substrate; via topaquinone role is filled by Tyr405. 2',4',5'-topaquinone is present on Tyr405. 2 residues coordinate Cu cation: His455 and His457. Asp464 contributes to the Mn(2+) binding site. Asn471 carries N-linked (GlcNAc...) asparagine glycosylation. Asp606 contributes to the Mn(2+) binding site. His617 is a Cu cation binding site.

Belongs to the copper/topaquinone oxidase family. In terms of assembly, homodimer. The cofactor is Cu cation. Requires Zn(2+) as cofactor. It depends on L-topaquinone as a cofactor. Mn(2+) is required as a cofactor. Post-translationally, topaquinone (TPQ) is generated by copper-dependent autoxidation of a specific tyrosyl residue.

It carries out the reaction histamine + O2 + H2O = imidazole-4-acetaldehyde + H2O2 + NH4(+). This Aspergillus niger protein is Copper amine oxidase 1 (AO-I).